The chain runs to 242 residues: Uridylate kinase (242 aa).

Position 11-14 (11-14) interacts with ATP; that stretch reads KLSG. A UMP-binding site is contributed by Gly-53. Residues Gly-54 and Arg-58 each coordinate ATP. Residues Asp-73 and 134–141 each bind UMP; that span reads SGNPFFTT. Positions 161, 167, and 170 each coordinate ATP.

Belongs to the UMP kinase family. Homohexamer.

The protein localises to the cytoplasm. The catalysed reaction is UMP + ATP = UDP + ADP. It participates in pyrimidine metabolism; CTP biosynthesis via de novo pathway; UDP from UMP (UMPK route): step 1/1. With respect to regulation, inhibited by UTP. Catalyzes the reversible phosphorylation of UMP to UDP. The polypeptide is Uridylate kinase (Thermosynechococcus vestitus (strain NIES-2133 / IAM M-273 / BP-1)).